The sequence spans 1963 residues: Myosin-4 (1963 aa).

A Myosin N-terminal SH3-like domain is found at Asp28–Pro77. The 707-residue stretch at Glu81–Asp787 folds into the Myosin motor domain. Lys125 is modified (N6,N6,N6-trimethyllysine). Gly174 to Thr181 is an ATP binding site. 2 actin-binding regions span residues Leu662–Glu684 and Arg766–Ala780. The alpha-helical tailpiece (S2) stretch occupies residues Met848–Glu1161. The stretch at Met848–Phe1963 forms a coiled coil. Composition is skewed to basic and acidic residues over residues Leu970–Gln988 and Asn1133–Ser1146. Disordered regions lie at residues Leu970 to Glu990 and Ser1125 to Ser1146. Residues Gln1162–Asn1173 are hinge. The segment at Gln1162–Phe1963 is light meromyosin (LMM). 2 disordered regions span residues Leu1317 to Gln1336 and Leu1912 to Phe1963. Residues Glu1322–Gln1336 are compositionally biased toward basic and acidic residues.

Belongs to the TRAFAC class myosin-kinesin ATPase superfamily. Myosin family. Muscle myosin is a hexameric protein that consists of 2 heavy chain subunits (MHC), 2 alkali light chain subunits (MLC) and 2 regulatory light chain subunits (MLC-2). Forms a complex composed of chaperone unc-45, unc-54 and ubiquitin-protein ligase ufd-2; promotes poly-ubiquitination of unfolded unc-54. Within the complex interacts with unc-45 (via UCS domain) and ufd-2. Interacts with itr-1 (via c-terminal coiled coil domain). Post-translationally, unfolded unc-54 is poly-ubiquitinated by ufd-2.

Its subcellular location is the cytoplasm. It localises to the myofibril. In terms of biological role, required for muscle contraction. The polypeptide is Myosin-4 (unc-54) (Caenorhabditis elegans).